We begin with the raw amino-acid sequence, 332 residues long: Glyceraldehyde-3-phosphate dehydrogenase 3 (332 aa).

Residues arginine 11, isoleucine 12, and aspartate 33 each coordinate NAD(+). Glycyl lysine isopeptide (Lys-Gly) (interchain with G-Cter in ubiquitin) cross-links involve residues lysine 46 and lysine 63. Threonine 120 is a binding site for NAD(+). D-glyceraldehyde 3-phosphate is bound at residue 149 to 151 (SCT). The Nucleophile role is filled by cysteine 150. A cysteine persulfide mark is found at cysteine 150 and cysteine 154. Lysine 160 participates in a covalent cross-link: Glycyl lysine isopeptide (Lys-Gly) (interchain with G-Cter in URM1). D-glyceraldehyde 3-phosphate is bound by residues threonine 180, 209–210 (TG), and arginine 232. Serine 302 is subject to Phosphoserine. Residue lysine 307 forms a Glycyl lysine isopeptide (Lys-Gly) (interchain with G-Cter in URM1) linkage. Residues asparagine 314 and tyrosine 318 each contribute to the NAD(+) site.

The protein belongs to the glyceraldehyde-3-phosphate dehydrogenase family. Homotetramer. In terms of processing, conjugated to URM1, a ubiquitin-like protein, in response to oxidative stresses. The attachment of URM1 to lysine residues exclusively depends on the presence of a peroxidatic cysteine in the target protein, with low specificity for the particular residue, motif, or structural context at which urmylation can occur. The URM1-conjugation reaction is mechanistically and directly coupled to the process of cysteine persulfidation, transfering the sulfur atom of the URM1 thiocarboxyl group to redox-active cysteine residues in the target protein if it is exposed to oxidative conditions. Post-translationally, persulfidated on specific redox-active cysteine residues. Persulfidation (also called protein S-sulfhydration) may provide a molecular mechanism that enables cells to protect vulnerable cysteine residues from reactive oxygen species (ROS) under stress conditions.

Its subcellular location is the cytoplasm. It localises to the mitochondrion. The catalysed reaction is D-glyceraldehyde 3-phosphate + phosphate + NAD(+) = (2R)-3-phospho-glyceroyl phosphate + NADH + H(+). It carries out the reaction NADH + H2O = (6R)-NADHX. It catalyses the reaction NADH + H2O = (6S)-NADHX. The enzyme catalyses NADPH + H2O = (6R)-NADPHX. The catalysed reaction is NADPH + H2O = (6S)-NADPHX. It participates in carbohydrate degradation; glycolysis; pyruvate from D-glyceraldehyde 3-phosphate: step 1/5. Its function is as follows. Glyceraldehyde-3-phosphate dehydrogenase (GAPDH) involved in glycolysis and gluconeogenesis. Catalyzes the reaction of glyceraldehyde-3-phosphate to 1,3 bis-phosphoglycerate. The contribution of the TDH1, TDH2, and TDH3 to the total glyceraldehyde-3-phosphate dehydrogenase activity is 10-15, 25-30, and 50-60%, respectively. Functionally, as a side activity, catalyzes the hydration of the nicotinamide ring of NADH or NADPH at the C6 position to give the corresponding hydrates, NADHX and NADPHX, which exist as R and S epimers, that cannot act as electron donors or acceptors and inhibit several dehydrogenases, making them toxic. The polypeptide is Glyceraldehyde-3-phosphate dehydrogenase 3 (Saccharomyces cerevisiae (strain ATCC 204508 / S288c) (Baker's yeast)).